The primary structure comprises 173 residues: Large ribosomal subunit protein uL10 (173 aa).

Belongs to the universal ribosomal protein uL10 family. Part of the ribosomal stalk of the 50S ribosomal subunit. The N-terminus interacts with L11 and the large rRNA to form the base of the stalk. The C-terminus forms an elongated spine to which L12 dimers bind in a sequential fashion forming a multimeric L10(L12)X complex.

In terms of biological role, forms part of the ribosomal stalk, playing a central role in the interaction of the ribosome with GTP-bound translation factors. The sequence is that of Large ribosomal subunit protein uL10 from Thermus thermophilus (strain ATCC BAA-163 / DSM 7039 / HB27).